The primary structure comprises 436 residues: GTPase Der (436 aa).

2 EngA-type G domains span residues 4–167 (PTVA…PNEI) and 175–351 (IKFS…HAQN). Residues 10-17 (GRPNVGKS), 57-61 (DTGGI), 119-122 (NKVD), 181-188 (GRPNVGKS), 229-233 (DTAGM), and 294-297 (NKWD) contribute to the GTP site. A KH-like domain is found at 352–436 (LRISSSVLND…PVHLIARKRK (85 aa)).

It belongs to the TRAFAC class TrmE-Era-EngA-EngB-Septin-like GTPase superfamily. EngA (Der) GTPase family. In terms of assembly, associates with the 50S ribosomal subunit.

In terms of biological role, GTPase that plays an essential role in the late steps of ribosome biogenesis. This is GTPase Der from Lactococcus lactis subsp. lactis (strain IL1403) (Streptococcus lactis).